A 645-amino-acid chain; its full sequence is DNA mismatch repair protein MutL (645 aa).

Belongs to the DNA mismatch repair MutL/HexB family.

In terms of biological role, this protein is involved in the repair of mismatches in DNA. It is required for dam-dependent methyl-directed DNA mismatch repair. May act as a 'molecular matchmaker', a protein that promotes the formation of a stable complex between two or more DNA-binding proteins in an ATP-dependent manner without itself being part of a final effector complex. This chain is DNA mismatch repair protein MutL, found in Pediococcus pentosaceus (strain ATCC 25745 / CCUG 21536 / LMG 10740 / 183-1w).